Here is a 398-residue protein sequence, read N- to C-terminus: RNA-binding protein rnc1 (398 aa).

The disordered stretch occupies residues 40 to 78 (KVSIPTPKPSTPLSTLTNGSTIQQSMTNQPEPTSQVPPI). Phosphothreonine is present on Thr-50. The span at 57–76 (NGSTIQQSMTNQPEPTSQVP) shows a compositional bias: polar residues. 2 consecutive KH domains span residues 93–157 (QLTL…YRFI) and 178–243 (PRKL…IWEI). Over residues 274 to 290 (ASTASPQQVSPPAAPST) the composition is skewed to low complexity. The interval 274 to 295 (ASTASPQQVSPPAAPSTTSGEA) is disordered. The region spanning 320–385 (KVTQNISIPA…EENEKALFLL (66 aa)) is the KH 3 domain.

Phosphorylated by pmk1. Phosphorylation causes enhancement of the RNA-binding activity.

Its subcellular location is the cytoplasm. Its function is as follows. Binds and stabilizes pmp1 mRNA and hence acts as a negative regulator of pmk1 signaling. Overexpression suppresses the Cl(-) sensitivity of calcineurin deletion. In Schizosaccharomyces pombe (strain 972 / ATCC 24843) (Fission yeast), this protein is RNA-binding protein rnc1.